The chain runs to 146 residues: Hemoglobin subunit beta (146 aa).

Residue valine 1 is modified to N-acetylvaline. Positions 2 to 146 (HLTGEEKSAV…VANALAHKYH (145 aa)) constitute a Globin domain. Position 12 is a phosphothreonine (threonine 12). Serine 44 bears the Phosphoserine mark. At lysine 59 the chain carries N6-acetyllysine. Heme b is bound at residue histidine 63. The residue at position 82 (lysine 82) is an N6-acetyllysine. Histidine 92 serves as a coordination point for heme b. An S-nitrosocysteine modification is found at cysteine 93. N6-acetyllysine is present on lysine 144.

It belongs to the globin family. Heterotetramer of two alpha chains and two beta chains. In terms of tissue distribution, red blood cells.

In terms of biological role, involved in oxygen transport from the lung to the various peripheral tissues. This Leontocebus fuscicollis (Brown-mantled tamarin) protein is Hemoglobin subunit beta (HBB).